A 1311-amino-acid polypeptide reads, in one-letter code: Clustered mitochondria protein homolog (1311 aa).

The disordered stretch occupies residues 1–46; the sequence is MAATNEVIPTSENPSDVSGSSQKLATEETALANGVDHEEEDSGEAG. Residues 7 to 24 are compositionally biased toward polar residues; that stretch reads VIPTSENPSDVSGSSQKL. Residues 335–579 enclose the Clu domain; it reads DITRTQENYL…RVTPLDITWM (245 aa). Disordered stretches follow at residues 629–691 and 915–965; these read ERKR…QERI and QSQT…VNAS. The segment covering 655–691 has biased composition (basic and acidic residues); it reads EASKSDEPTENGELAKKADESDKDAEPSKPAADQERI. A compositionally biased stretch (polar residues) spans 915-930; that stretch reads QSQTEAAAAPPTTNGE. TPR repeat units lie at residues 1034 to 1067, 1076 to 1109, and 1118 to 1151; these read ARVY…SERT, LLNY…WKVV, and ITTI…CEEV. The interval 1236–1311 is disordered; that stretch reads VSPRVTLGQT…RGGAAAAAGK (76 aa). The segment covering 1242–1253 has biased composition (polar residues); that stretch reads LGQTQLQPQVGQ. The segment covering 1259 to 1279 has biased composition (basic and acidic residues); the sequence is AGRDSRSSRGLDSRSIDELLK. The segment covering 1289–1303 has biased composition (basic residues); that stretch reads KNKKRPGRSNPKRRG.

It belongs to the CLU family. As to quaternary structure, may associate with the eukaryotic translation initiation factor 3 (eIF-3) complex.

The protein resides in the cytoplasm. Its function is as follows. mRNA-binding protein involved in proper cytoplasmic distribution of mitochondria. The chain is Clustered mitochondria protein homolog from Sclerotinia sclerotiorum (strain ATCC 18683 / 1980 / Ss-1) (White mold).